Consider the following 115-residue polypeptide: Large ribosomal subunit protein bL19 (115 aa).

It belongs to the bacterial ribosomal protein bL19 family.

In terms of biological role, this protein is located at the 30S-50S ribosomal subunit interface and may play a role in the structure and function of the aminoacyl-tRNA binding site. The chain is Large ribosomal subunit protein bL19 from Oleidesulfovibrio alaskensis (strain ATCC BAA-1058 / DSM 17464 / G20) (Desulfovibrio alaskensis).